The chain runs to 195 residues: Inner membrane-spanning protein YciB (195 aa).

Helical transmembrane passes span 34 to 54 (IYGATATLILASVIVYGALWL), 65 to 85 (FTLGACLVLGGLTLAFHEDTF), 88 to 108 (WKAPLVNWLFALAFAGSHFIG), 131 to 151 (LNIAWVVFFLVCGFANLYVVF), and 160 to 180 (FKVFGSLGMTLLFLIGQGLFL).

This sequence belongs to the YciB family.

It localises to the cell inner membrane. In terms of biological role, plays a role in cell envelope biogenesis, maintenance of cell envelope integrity and membrane homeostasis. The sequence is that of Inner membrane-spanning protein YciB from Pseudomonas aeruginosa (strain LESB58).